Reading from the N-terminus, the 107-residue chain is Putative double-stranded DNA mimic protein HS_0995 (107 aa).

The protein belongs to the putative dsDNA mimic protein family.

Its function is as follows. May act as a double-stranded DNA (dsDNA) mimic. Probably regulates the activity of a dsDNA-binding protein. This is Putative double-stranded DNA mimic protein HS_0995 from Histophilus somni (strain 129Pt) (Haemophilus somnus).